The primary structure comprises 142 residues: Large ribosomal subunit protein uL11 (142 aa).

It belongs to the universal ribosomal protein uL11 family. In terms of assembly, part of the ribosomal stalk of the 50S ribosomal subunit. Interacts with L10 and the large rRNA to form the base of the stalk. L10 forms an elongated spine to which L12 dimers bind in a sequential fashion forming a multimeric L10(L12)X complex. Post-translationally, one or more lysine residues are methylated.

Functionally, forms part of the ribosomal stalk which helps the ribosome interact with GTP-bound translation factors. The sequence is that of Large ribosomal subunit protein uL11 from Bradyrhizobium sp. (strain ORS 278).